Here is a 155-residue protein sequence, read N- to C-terminus: Endoribonuclease YbeY (155 aa).

Positions 110, 114, and 120 each coordinate Zn(2+).

This sequence belongs to the endoribonuclease YbeY family. Zn(2+) is required as a cofactor.

The protein resides in the cytoplasm. Its function is as follows. Single strand-specific metallo-endoribonuclease involved in late-stage 70S ribosome quality control and in maturation of the 3' terminus of the 16S rRNA. The sequence is that of Endoribonuclease YbeY from Deinococcus geothermalis (strain DSM 11300 / CIP 105573 / AG-3a).